Reading from the N-terminus, the 280-residue chain is Ribosomal RNA small subunit methyltransferase A (280 aa).

Positions 30, 32, 57, 78, 108, and 125 each coordinate S-adenosyl-L-methionine.

This sequence belongs to the class I-like SAM-binding methyltransferase superfamily. rRNA adenine N(6)-methyltransferase family. RsmA subfamily.

The protein resides in the cytoplasm. The enzyme catalyses adenosine(1518)/adenosine(1519) in 16S rRNA + 4 S-adenosyl-L-methionine = N(6)-dimethyladenosine(1518)/N(6)-dimethyladenosine(1519) in 16S rRNA + 4 S-adenosyl-L-homocysteine + 4 H(+). In terms of biological role, specifically dimethylates two adjacent adenosines (A1518 and A1519) in the loop of a conserved hairpin near the 3'-end of 16S rRNA in the 30S particle. May play a critical role in biogenesis of 30S subunits. This Leifsonia xyli subsp. xyli (strain CTCB07) protein is Ribosomal RNA small subunit methyltransferase A.